Reading from the N-terminus, the 456-residue chain is tRNA(Ile)-lysidine synthase (456 aa).

Ser27–Ser32 is an ATP binding site.

This sequence belongs to the tRNA(Ile)-lysidine synthase family.

It localises to the cytoplasm. It catalyses the reaction cytidine(34) in tRNA(Ile2) + L-lysine + ATP = lysidine(34) in tRNA(Ile2) + AMP + diphosphate + H(+). Its function is as follows. Ligates lysine onto the cytidine present at position 34 of the AUA codon-specific tRNA(Ile) that contains the anticodon CAU, in an ATP-dependent manner. Cytidine is converted to lysidine, thus changing the amino acid specificity of the tRNA from methionine to isoleucine. In Vibrio atlanticus (strain LGP32) (Vibrio splendidus (strain Mel32)), this protein is tRNA(Ile)-lysidine synthase.